Reading from the N-terminus, the 275-residue chain is Large ribosomal subunit protein uL2 (275 aa).

The interval 223-275 (VAMNPVDHPHGGGEGRTSGGRHPVSPWGQPTKGYKTRSNKRTDKYIVRRRNKK) is disordered.

The protein belongs to the universal ribosomal protein uL2 family. Part of the 50S ribosomal subunit. Forms a bridge to the 30S subunit in the 70S ribosome.

Its function is as follows. One of the primary rRNA binding proteins. Required for association of the 30S and 50S subunits to form the 70S ribosome, for tRNA binding and peptide bond formation. It has been suggested to have peptidyltransferase activity; this is somewhat controversial. Makes several contacts with the 16S rRNA in the 70S ribosome. This chain is Large ribosomal subunit protein uL2, found in Shewanella piezotolerans (strain WP3 / JCM 13877).